We begin with the raw amino-acid sequence, 406 residues long: Mitochondrial intermembrane space import and assembly protein 40 (406 aa).

The N-terminal 23 residues, 1–23, are a transit peptide targeting the mitochondrion; it reads MFRVSLQATRRVAFRSARQIRFY. The Mitochondrial matrix segment spans residues 24–37; sequence SAHPPSGGVSHMNK. A helical; Signal-anchor for type II membrane protein membrane pass occupies residues 38-54; the sequence is PALLLAGFSTLGAIYVA. Over 55–406 the chain is Mitochondrial intermembrane; sequence DGCPTLIERK…AVTNTDDEKK (352 aa). Disordered stretches follow at residues 67–110 and 142–276; these read PAEK…TTPE and VNEQ…PETG. Residues 205–224 show a composition bias toward basic and acidic residues; sequence ASKDGSEGESDVVLHEKSPA. Residues 242 to 260 are compositionally biased toward low complexity; it reads SGGTAEQSATAAAAAAGVQ. 3 disulfide bridges follow: C282–C284, C293–C326, and C303–C316. The 45-residue stretch at 290–334 folds into the CHCH domain; it reads YGPCGEEFKSAFSCFVYSEADPKGINCVEKFSTMQNCFRKYPDYY. 2 consecutive short sequence motifs (cx9C motif) follow at residues 293–303 and 316–326; these read CGEEFKSAFSC and CVEKFSTMQNC. 2 disordered regions span residues 341–365 and 384–406; these read EEEA…ATST and EENP…DEKK. Residues 356-365 show a composition bias toward low complexity; that stretch reads TTPVSTATST. The segment covering 384–393 has biased composition (basic and acidic residues); sequence EENPQLKDTP.

In terms of assembly, monomer. Cu(2+) serves as cofactor. The cofactor is Zn(2+).

It is found in the mitochondrion inner membrane. Its function is as follows. Required for the import and folding of small cysteine-containing proteins (small Tim) in the mitochondrial intermembrane space (IMS). Forms a redox cycle with ERV1 that involves a disulfide relay system. Precursor proteins to be imported into the IMS are translocated in their reduced form into the mitochondria. The oxidized form of MIA40 forms a transient intermolecular disulfide bridge with the reduced precursor protein, resulting in oxidation of the precursor protein that now contains an intramolecular disulfide bond and is able to undergo folding in the IMS. The polypeptide is Mitochondrial intermembrane space import and assembly protein 40 (MIA40) (Kluyveromyces lactis (strain ATCC 8585 / CBS 2359 / DSM 70799 / NBRC 1267 / NRRL Y-1140 / WM37) (Yeast)).